A 341-amino-acid polypeptide reads, in one-letter code: MSDPTQKIAVLGAGSWGTALAALVARHGHPTVLWGRDAAMVDAIDRTHENPRYLPGIALPDSLRATTDLQQTIAGASWILVVVPSHAFTETIKLLAPLRPAGAGIAWATKGFEPGSGRFLHEVARDILGPSVPLAVVTGPSFAKEVTLGLPTAITVHGDDAAFAQVVADAMHGPTFRAYTGDDMVGAELGGAMKNVLAVATGVADGMQLGLNARAGLITRGLNEMLRLAAVIGARPETLMGLAGLGDLVLTCTGDLSRNRRLGLALGRGQSLSDAIREIGQVVESVQTADEVMRQAEQHGIELPISNAVRAVLHGEITPEAGLKELLARERKPEYPQTLFT.

NADPH is bound by residues S15, W16, R36, and K110. K110, G139, and S141 together coordinate sn-glycerol 3-phosphate. Residue A143 coordinates NADPH. 5 residues coordinate sn-glycerol 3-phosphate: K194, D247, S257, R258, and N259. The active-site Proton acceptor is K194. An NADPH-binding site is contributed by R258. 2 residues coordinate NADPH: V282 and E284.

It belongs to the NAD-dependent glycerol-3-phosphate dehydrogenase family.

It is found in the cytoplasm. The catalysed reaction is sn-glycerol 3-phosphate + NAD(+) = dihydroxyacetone phosphate + NADH + H(+). It carries out the reaction sn-glycerol 3-phosphate + NADP(+) = dihydroxyacetone phosphate + NADPH + H(+). It participates in membrane lipid metabolism; glycerophospholipid metabolism. In terms of biological role, catalyzes the reduction of the glycolytic intermediate dihydroxyacetone phosphate (DHAP) to sn-glycerol 3-phosphate (G3P), the key precursor for phospholipid synthesis. This chain is Glycerol-3-phosphate dehydrogenase [NAD(P)+], found in Xanthomonas campestris pv. campestris (strain 8004).